Here is a 98-residue protein sequence, read N- to C-terminus: NADH-ubiquinone oxidoreductase chain 4L (98 aa).

3 helical membrane passes run 1–21 (MTLI…GLLM), 29–49 (ALLC…LTIL), and 61–81 (IILL…LVMV).

This sequence belongs to the complex I subunit 4L family. In terms of assembly, core subunit of respiratory chain NADH dehydrogenase (Complex I) which is composed of 45 different subunits.

Its subcellular location is the mitochondrion inner membrane. It carries out the reaction a ubiquinone + NADH + 5 H(+)(in) = a ubiquinol + NAD(+) + 4 H(+)(out). In terms of biological role, core subunit of the mitochondrial membrane respiratory chain NADH dehydrogenase (Complex I) which catalyzes electron transfer from NADH through the respiratory chain, using ubiquinone as an electron acceptor. Part of the enzyme membrane arm which is embedded in the lipid bilayer and involved in proton translocation. In Balaenoptera omurai (Omura's baleen whale), this protein is NADH-ubiquinone oxidoreductase chain 4L (MT-ND4L).